We begin with the raw amino-acid sequence, 344 residues long: Phenylalanine--tRNA ligase alpha subunit (344 aa).

Glu257 provides a ligand contact to Mg(2+).

It belongs to the class-II aminoacyl-tRNA synthetase family. Phe-tRNA synthetase alpha subunit type 1 subfamily. In terms of assembly, tetramer of two alpha and two beta subunits. Mg(2+) serves as cofactor.

Its subcellular location is the cytoplasm. The enzyme catalyses tRNA(Phe) + L-phenylalanine + ATP = L-phenylalanyl-tRNA(Phe) + AMP + diphosphate + H(+). The chain is Phenylalanine--tRNA ligase alpha subunit from Chlorobium chlorochromatii (strain CaD3).